Consider the following 313-residue polypeptide: Uracil-DNA glycosylase (313 aa).

Residues M1 to S12 are compositionally biased toward polar residues. Residues M1 to E25 are interaction with FAM72A. The interval M1–Q29 is mitochondrial localization signal. A disordered region spans residues M1–A68. Phosphoserine is present on residues S12 and S14. The Important for nuclear sorting motif lies at R17 to R19. S23 bears the Phosphoserine mark. A compositionally biased stretch (low complexity) spans A43–A53. Phosphothreonine is present on T60. S64 bears the Phosphoserine mark. Positions R73–R88 are interaction with RPA2. Q153 serves as a coordination point for uracil. D154 (proton acceptor) is an active-site residue. H157 provides a ligand contact to dsDNA. Uracil is bound at residue F167. S178 lines the dsDNA pocket. Residue N213 participates in uracil binding. Residues S256, H277, S279, S282, and R285 each contribute to the dsDNA site. H277 is a uracil binding site. The residue at position 295 (K295) is an N6-acetyllysine.

It belongs to the uracil-DNA glycosylase (UDG) superfamily. UNG family. As to quaternary structure, monomer. Interacts with RPA2 subunit of the RPA trimer; this interaction mediates UNG2 recruitment to RPA-coated single-stranded DNA at stalled replication forks. Interacts with PCNA; this interaction mediates UNG2 recruitment to S-phase replication foci. Interacts (via N-terminus) with FAM72A. In terms of assembly, (Microbial infection) Interacts with HIV-1 Vpr. Post-translationally, processed by mitochondrial serine or cysteine peptidases to yield a mature dominant form that lacks N-terminal 29 amino acid residues and another minor form that lacks N-terminal 77 amino acid residues. The catalytic activity of UNG1 delta29 is not product-inhibited by AP sites.

The protein resides in the mitochondrion. The protein localises to the nucleus. It carries out the reaction Hydrolyzes single-stranded DNA or mismatched double-stranded DNA and polynucleotides, releasing free uracil.. The enzyme catalyses a 2'-deoxyuridine in single-stranded DNA + H2O = a 2'-deoxyribose 5'-monophosphate in single-stranded DNA + uracil. The catalysed reaction is a 2'-deoxyuridine in double-stranded DNA + H2O = a 2'-deoxyribose 5'-monophosphate in double-stranded DNA + uracil. Functionally, uracil-DNA glycosylase that hydrolyzes the N-glycosidic bond between uracil and deoxyribose in single- and double-stranded DNA (ssDNA and dsDNA) to release a free uracil residue and form an abasic (apurinic/apyrimidinic; AP) site. Excises uracil residues arising as a result of misincorporation of dUMP residues by DNA polymerase during replication or due to spontaneous or enzymatic deamination of cytosine. Mediates error-free base excision repair (BER) of uracil at replication forks. According to the model, it is recruited by PCNA to S-phase replication forks to remove misincorporated uracil at U:A base mispairs in nascent DNA strands. Via trimeric RPA it is recruited to ssDNA stretches ahead of the polymerase to allow detection and excision of deaminated cytosines prior to replication. The resultant AP sites temporarily stall replication, allowing time to repair the lesion. Mediates mutagenic uracil processing involved in antibody affinity maturation. Processes AICDA-induced U:G base mispairs at variable immunoglobulin (Ig) regions leading to the generation of transversion mutations. Operates at switch sites of Ig constant regions where it mediates Ig isotype class switch recombination. Excises AICDA-induced uracil residues forming AP sites that are subsequently nicked by APEX1 endonuclease. The accumulation of staggered nicks in opposite strands results in double strand DNA breaks that are finally resolved via non-homologous end joining repair pathway. The chain is Uracil-DNA glycosylase from Homo sapiens (Human).